We begin with the raw amino-acid sequence, 634 residues long: DNA-directed RNA polymerase subunit gamma (634 aa).

Cys-74, Cys-76, Cys-89, and Cys-92 together coordinate Zn(2+). Mg(2+)-binding residues include Asp-471, Asp-473, and Asp-475.

The protein belongs to the RNA polymerase beta' chain family. RpoC1 subfamily. As to quaternary structure, in cyanobacteria the RNAP catalytic core is composed of 2 alpha, 1 beta, 1 beta', 1 gamma and 1 omega subunit. When a sigma factor is associated with the core the holoenzyme is formed, which can initiate transcription. Requires Mg(2+) as cofactor. Zn(2+) is required as a cofactor.

The catalysed reaction is RNA(n) + a ribonucleoside 5'-triphosphate = RNA(n+1) + diphosphate. DNA-dependent RNA polymerase catalyzes the transcription of DNA into RNA using the four ribonucleoside triphosphates as substrates. The protein is DNA-directed RNA polymerase subunit gamma of Synechococcus sp. (strain CC9311).